The chain runs to 274 residues: Rhamnulose-1-phosphate aldolase (274 aa).

The active site involves E117. Zn(2+) is bound by residues H141, H143, and H212.

The protein belongs to the aldolase class II family. RhaD subfamily. As to quaternary structure, homotetramer. Zn(2+) serves as cofactor.

Its subcellular location is the cytoplasm. It carries out the reaction L-rhamnulose 1-phosphate = (S)-lactaldehyde + dihydroxyacetone phosphate. It participates in carbohydrate degradation; L-rhamnose degradation; glycerone phosphate from L-rhamnose: step 3/3. Functionally, catalyzes the reversible cleavage of L-rhamnulose-1-phosphate to dihydroxyacetone phosphate (DHAP) and L-lactaldehyde. The polypeptide is Rhamnulose-1-phosphate aldolase (Escherichia coli (strain K12 / MC4100 / BW2952)).